A 207-amino-acid chain; its full sequence is dTTP/UTP pyrophosphatase (207 aa).

Aspartate 68 functions as the Proton acceptor in the catalytic mechanism.

This sequence belongs to the Maf family. YhdE subfamily. It depends on a divalent metal cation as a cofactor.

It is found in the cytoplasm. The enzyme catalyses dTTP + H2O = dTMP + diphosphate + H(+). The catalysed reaction is UTP + H2O = UMP + diphosphate + H(+). In terms of biological role, nucleoside triphosphate pyrophosphatase that hydrolyzes dTTP and UTP. May have a dual role in cell division arrest and in preventing the incorporation of modified nucleotides into cellular nucleic acids. This Staphylothermus marinus (strain ATCC 43588 / DSM 3639 / JCM 9404 / F1) protein is dTTP/UTP pyrophosphatase.